A 208-amino-acid chain; its full sequence is Ribosomal RNA small subunit methyltransferase J (208 aa).

Residues 54–55, 70–71, and D122 contribute to the S-adenosyl-L-methionine site; these read RD and ER.

It belongs to the methyltransferase superfamily. RsmJ family.

It localises to the cytoplasm. It catalyses the reaction guanosine(1516) in 16S rRNA + S-adenosyl-L-methionine = N(2)-methylguanosine(1516) in 16S rRNA + S-adenosyl-L-homocysteine + H(+). Its function is as follows. Specifically methylates the guanosine in position 1516 of 16S rRNA. In Agrobacterium fabrum (strain C58 / ATCC 33970) (Agrobacterium tumefaciens (strain C58)), this protein is Ribosomal RNA small subunit methyltransferase J.